The following is a 2543-amino-acid chain: Zinc finger FYVE domain-containing protein 26 (2543 aa).

A Phosphoserine modification is found at Ser297. Disordered stretches follow at residues 523 to 545 (ECRDSPSEDPALAAEPANDSLSS), 609 to 636 (GLLGLRSPSESPQHIAQPERKSEQGCQE), 699 to 722 (LSSHSPPEKPKLPEGQSCSGSRDG), and 744 to 820 (VTSN…GRLQ). 3 positions are modified to phosphoserine: Ser615, Ser619, and Ser703. The segment covering 699–710 (LSSHSPPEKPKL) has biased composition (basic and acidic residues). Residues 767–776 (SLRRGRRTRR) are compositionally biased toward basic residues. Low complexity predominate over residues 786–806 (SNPSLESTSSELSTSTSEGSL). Ser802 carries the phosphoserine modification. Residues 870–897 (MFMERYQEVIQELSRVEHKIENQNSDGG) adopt a coiled-coil conformation. The segment at 1272–1299 (LSTLSSPKPTGNSTLERKPHSSPRDSSL) is disordered. Residues 1273 to 1285 (STLSSPKPTGNST) show a composition bias toward polar residues. 4 positions are modified to phosphoserine: Ser1744, Ser1765, Ser1784, and Ser1786. The disordered stretch occupies residues 1780–1812 (STIHSPSPRERSFPESQPPPEFVPPATPPGRPQ). Pro residues predominate over residues 1795–1810 (SQPPPEFVPPATPPGR). An FYVE-type zinc finger spans residues 1816 to 1876 (DESASICMVC…VCDQCYSYYN (61 aa)). Residues Cys1822, Cys1825, Cys1839, Cys1842, Cys1847, Cys1850, Cys1868, and Cys1871 each contribute to the Zn(2+) site.

It belongs to the ZFYVE26 family. In terms of assembly, interacts with AP5Z1, AP5B1, AP5S1 and SPG11. Interacts with TTC19 and KIF13A.

It localises to the cytoplasm. The protein resides in the cytoskeleton. It is found in the microtubule organizing center. Its subcellular location is the centrosome. The protein localises to the midbody. Its function is as follows. Phosphatidylinositol 3-phosphate-binding protein required for the abscission step in cytokinesis: recruited to the midbody during cytokinesis and acts as a regulator of abscission. May also be required for efficient homologous recombination DNA double-strand break repair. This chain is Zinc finger FYVE domain-containing protein 26 (ZFYVE26), found in Ailuropoda melanoleuca (Giant panda).